The primary structure comprises 272 residues: Urease accessory protein UreD (272 aa).

The protein belongs to the UreD family. As to quaternary structure, ureD, UreF and UreG form a complex that acts as a GTP-hydrolysis-dependent molecular chaperone, activating the urease apoprotein by helping to assemble the nickel containing metallocenter of UreC. The UreE protein probably delivers the nickel.

Its subcellular location is the cytoplasm. In terms of biological role, required for maturation of urease via the functional incorporation of the urease nickel metallocenter. This Opitutus terrae (strain DSM 11246 / JCM 15787 / PB90-1) protein is Urease accessory protein UreD.